A 381-amino-acid polypeptide reads, in one-letter code: MRLDDPVSLACRLMSYPSVTPDRSGAIPFLAELLSDLGFRCEILSFGNGDVEVKNLYAQYGNGHPNLCFAGHTDVVPPGGTWRTDPFSPQVKDGMLYGRGASDMKAAICAYISAVARLDSVPGCLSFLITGDEEGRWREYGTKSVLDWMTKNGICPDYCVLGEPSSRKRLGDCISIGRRGSLNFELSCRGVQGHVAYPELAHNPIDDVLCILRKIKDTTLDSGTDHFPPSHCEITSIDVGNDVENLIPSSATAAFNIRFNDLHTAESLYRDMDAICASVTSNYTLSHRCFGGASISQPSCYTATLCEVVKEVTGLDARLITDGGTSDACIISSFCPVAELGLPSGTAHKVDECVSVADVLTLAEIYHRFINRFFAVAQSRS.

A Zn(2+)-binding site is contributed by H72. The active site involves D74. D103 serves as a coordination point for Zn(2+). E133 serves as the catalytic Proton acceptor. Positions 134, 163, and 348 each coordinate Zn(2+).

The protein belongs to the peptidase M20A family. DapE subfamily. In terms of assembly, homodimer. The cofactor is Zn(2+). Co(2+) is required as a cofactor.

It carries out the reaction N-succinyl-(2S,6S)-2,6-diaminopimelate + H2O = (2S,6S)-2,6-diaminopimelate + succinate. It functions in the pathway amino-acid biosynthesis; L-lysine biosynthesis via DAP pathway; LL-2,6-diaminopimelate from (S)-tetrahydrodipicolinate (succinylase route): step 3/3. Catalyzes the hydrolysis of N-succinyl-L,L-diaminopimelic acid (SDAP), forming succinate and LL-2,6-diaminopimelate (DAP), an intermediate involved in the bacterial biosynthesis of lysine and meso-diaminopimelic acid, an essential component of bacterial cell walls. This is Succinyl-diaminopimelate desuccinylase from Anaplasma marginale (strain Florida).